Consider the following 1360-residue polypeptide: DNA-directed RNA polymerase subunit beta (1360 aa).

It belongs to the RNA polymerase beta chain family. In terms of assembly, the RNAP catalytic core consists of 2 alpha, 1 beta, 1 beta' and 1 omega subunit. When a sigma factor is associated with the core the holoenzyme is formed, which can initiate transcription.

It carries out the reaction RNA(n) + a ribonucleoside 5'-triphosphate = RNA(n+1) + diphosphate. In terms of biological role, DNA-dependent RNA polymerase catalyzes the transcription of DNA into RNA using the four ribonucleoside triphosphates as substrates. The protein is DNA-directed RNA polymerase subunit beta of Caulobacter sp. (strain K31).